We begin with the raw amino-acid sequence, 397 residues long: uncharacterized protein (397 aa).

A run of 4 helical transmembrane segments spans residues 255–275, 284–304, 308–328, and 370–390; these read LLTYGISLTIISIFLYMICYA, MITFQWILFTGGLSALGVLLA, LITALVAFLSAPITTLVPLPL, and VLLVATLSNLGASIGVFYCLG.

The protein localises to the cell membrane. This is an uncharacterized protein from Methanocaldococcus jannaschii (strain ATCC 43067 / DSM 2661 / JAL-1 / JCM 10045 / NBRC 100440) (Methanococcus jannaschii).